The sequence spans 161 residues: MTVSFRPTADLVDDIGPDVRSCDLQFRQLGGRTEFAGPISTVRCFQDNALLKSVLSEPGGGGVLVVDGGGSLHTALVGDVIAELARANGWAGLIVNGAVRDSAALRGMDIGVKALGTNPRKSTKTGAGERDVDITLGGVTFTPGDIAYSDDDGIVVVAAGD.

Substrate contacts are provided by residues 78 to 81 and Arg-100; that span reads GDVI. Asp-101 provides a ligand contact to a divalent metal cation.

The protein belongs to the class II aldolase/RraA-like family. As to quaternary structure, homotrimer. It depends on a divalent metal cation as a cofactor.

It carries out the reaction 4-hydroxy-4-methyl-2-oxoglutarate = 2 pyruvate. It catalyses the reaction oxaloacetate + H(+) = pyruvate + CO2. Catalyzes the aldol cleavage of 4-hydroxy-4-methyl-2-oxoglutarate (HMG) into 2 molecules of pyruvate. Also contains a secondary oxaloacetate (OAA) decarboxylase activity due to the common pyruvate enolate transition state formed following C-C bond cleavage in the retro-aldol and decarboxylation reactions. The sequence is that of Putative 4-hydroxy-4-methyl-2-oxoglutarate aldolase from Mycobacterium avium (strain 104).